The primary structure comprises 453 residues: Bifunctional protein GlmU (453 aa).

The segment at 1 to 225 is pyrophosphorylase; sequence MHAHVILAAG…AEEALGVNTR (225 aa). UDP-N-acetyl-alpha-D-glucosamine contacts are provided by residues 7–10, Lys21, Gln72, and 77–78; these read LAAG and GT. Asp102 provides a ligand contact to Mg(2+). 4 residues coordinate UDP-N-acetyl-alpha-D-glucosamine: Gly138, Glu152, Asn167, and Asn223. Residue Asn223 participates in Mg(2+) binding. The interval 226 to 246 is linker; the sequence is EELARVEGVLLRRLRAEWMGK. The tract at residues 247-453 is N-acetyltransferase; it reads GVRMILPETI…GYALRKLGEG (207 aa). Arg329 and Lys347 together coordinate UDP-N-acetyl-alpha-D-glucosamine. Residue His359 is the Proton acceptor of the active site. Tyr362 and Asn373 together coordinate UDP-N-acetyl-alpha-D-glucosamine. Residues Ala376, 382–383, Ser401, Ala419, and Arg436 each bind acetyl-CoA; that span reads NY.

The protein in the N-terminal section; belongs to the N-acetylglucosamine-1-phosphate uridyltransferase family. This sequence in the C-terminal section; belongs to the transferase hexapeptide repeat family. In terms of assembly, homotrimer. Mg(2+) serves as cofactor.

The protein resides in the cytoplasm. It carries out the reaction alpha-D-glucosamine 1-phosphate + acetyl-CoA = N-acetyl-alpha-D-glucosamine 1-phosphate + CoA + H(+). The catalysed reaction is N-acetyl-alpha-D-glucosamine 1-phosphate + UTP + H(+) = UDP-N-acetyl-alpha-D-glucosamine + diphosphate. It functions in the pathway nucleotide-sugar biosynthesis; UDP-N-acetyl-alpha-D-glucosamine biosynthesis; N-acetyl-alpha-D-glucosamine 1-phosphate from alpha-D-glucosamine 6-phosphate (route II): step 2/2. It participates in nucleotide-sugar biosynthesis; UDP-N-acetyl-alpha-D-glucosamine biosynthesis; UDP-N-acetyl-alpha-D-glucosamine from N-acetyl-alpha-D-glucosamine 1-phosphate: step 1/1. The protein operates within bacterial outer membrane biogenesis; LPS lipid A biosynthesis. Catalyzes the last two sequential reactions in the de novo biosynthetic pathway for UDP-N-acetylglucosamine (UDP-GlcNAc). The C-terminal domain catalyzes the transfer of acetyl group from acetyl coenzyme A to glucosamine-1-phosphate (GlcN-1-P) to produce N-acetylglucosamine-1-phosphate (GlcNAc-1-P), which is converted into UDP-GlcNAc by the transfer of uridine 5-monophosphate (from uridine 5-triphosphate), a reaction catalyzed by the N-terminal domain. The polypeptide is Bifunctional protein GlmU (Thermus thermophilus (strain ATCC BAA-163 / DSM 7039 / HB27)).